Reading from the N-terminus, the 301-residue chain is Large ribosomal subunit protein uL4 (301 aa).

The tract at residues 1–223 is large ribosomal subunit protein uL4; sequence MNETKTIDVL…TQALSAQPEV (223 aa). The interval 49–105 is disordered; the sequence is QGTHATKTRGQVSGGGKKPWRQKGTGRARQGSTRAPQWVGGGTVHGPQPRSYAQRTP. Residues 224–301 are unknown; it reads PETNVADQHP…KSDSEKEDAK (78 aa).

It belongs to the universal ribosomal protein uL4 family. As to quaternary structure, part of the 50S ribosomal subunit.

One of the primary rRNA binding proteins, this protein initially binds near the 5'-end of the 23S rRNA. It is important during the early stages of 50S assembly. It makes multiple contacts with different domains of the 23S rRNA in the assembled 50S subunit and ribosome. Its function is as follows. Forms part of the polypeptide exit tunnel. The sequence is that of Large ribosomal subunit protein uL4 from Cutibacterium acnes (strain DSM 16379 / KPA171202) (Propionibacterium acnes).